The primary structure comprises 114 residues: Large ribosomal subunit protein bL20c (114 aa).

This sequence belongs to the bacterial ribosomal protein bL20 family.

It localises to the plastid. The protein resides in the cyanelle. In terms of biological role, binds directly to 23S ribosomal RNA and is necessary for the in vitro assembly process of the 50S ribosomal subunit. It is not involved in the protein synthesizing functions of that subunit. The polypeptide is Large ribosomal subunit protein bL20c (rpl20) (Cyanophora paradoxa).